Consider the following 327-residue polypeptide: MPRKTSSQPRPAEPKAVLHPRNRHSGRYDFPKLIAACPELGEYVILNPYGKQSIDFANPDAVRVFNRALLRQFYGIQHWDIPAGYLCPPVPGRADYLHGLADLLAADNAGVIPRGAAVRVLDIGTGANCIYPLIGHREYGWRFTGSDIDATALASARTIVAANRLDKVIELRRQDTSTQLFKGILAADERFELTLCNPPFHASQAEAASGSQRKWRNLGKLDPSRKLPKLNFGGQAAELWCEGGEAAFVARMADESVAYAKQVYRFSTLVSKGGNVAPLMVRLQRLGALQVQALDMAQGQKKSRFVTWTFLDAAEQAAWRTERWPRS.

The segment at 1-24 (MPRKTSSQPRPAEPKAVLHPRNRH) is disordered.

The protein belongs to the methyltransferase superfamily. METTL16/RlmF family.

Its subcellular location is the cytoplasm. It catalyses the reaction adenosine(1618) in 23S rRNA + S-adenosyl-L-methionine = N(6)-methyladenosine(1618) in 23S rRNA + S-adenosyl-L-homocysteine + H(+). Functionally, specifically methylates the adenine in position 1618 of 23S rRNA. The sequence is that of Ribosomal RNA large subunit methyltransferase F from Stutzerimonas stutzeri (strain A1501) (Pseudomonas stutzeri).